Here is a 3674-residue protein sequence, read N- to C-terminus: Dystrophin (3674 aa).

The actin-binding stretch occupies residues 1–236; it reads MSEVSSDERE…YVTSLFQVLP (236 aa). 2 consecutive Calponin-homology (CH) domains span residues 11-115 and 130-236; these read DVQK…LHWQ and TNSE…QVLP. The tract at residues 59–68 is ANK2- and ANK-3 binding; that stretch reads PKEKGSTRVH. Over residues 306–318 the composition is skewed to polar residues; it reads SDPTRSPFPSQRL. The tract at residues 306–325 is disordered; the sequence is SDPTRSPFPSQRLESPEDKS. Spectrin repeat units lie at residues 335–443, 444–552, 555–663, 715–824, 826–930, 939–1041, 1044–1150, 1153–1259, 1262–1363, 1364–1459, 1464–1564, 1567–1672, 1675–1774, 1775–1870, 1873–1975, 1988–2097, 2100–2204, 2207–2314, 2315–2412, 2464–2566, 2569–2675, 2678–2791, 2797–2919, and 2924–3029; these read VNLD…NLHK, VLMD…LLQD, LKWQ…QISQ, EIRK…WLEY, NRII…ELQI, RYQE…KLEE, AKLR…ALKG, DKTI…TLEE, ACWH…LLEQ, SIQS…LFQK, EQRL…QLEK, KLSR…LLLE, KHME…KASI, PLKE…KALE, HQWY…TVHE, EISY…KFDR, EKWR…RLEE, NILS…EIEA, HIKD…LRAK, FNRA…QLNE, KDST…VLEE, RLLQ…HLEA, KRLH…RKID, and RLQE…QLHE. Residues 1411–1909 form an interaction with SYNM region; sequence SDLTSHEISL…PEPQDEKKIK (499 aa). Residues 3044–3077 enclose the WW domain; that stretch reads TSVQGPWERAISPNKVPYYINHETQTTCWDHPKM. An interaction with SYNM region spans residues 3047 to 3397; sequence QGPWERAISP…TVLEGDNMET (351 aa). The ZZ-type; degenerate zinc finger occupies 3297-3353; sequence KHQAKCNICKECPIIGFRYRSLKHFNYDICQSCFFSGRVAKGHKMHYPMVEYCTPTT. Zn(2+) is bound by residues Cys-3302, Cys-3305, Cys-3326, and Cys-3329. Residues 3455–3507 form a binds to SNTB1 region; it reads DDEHLLIQHYCQSLNQDSPLSQPRSPAQILISLESEERGELERILADLEEENR. A phosphoserine mark is found at Ser-3472, Ser-3479, and Ser-3489. 2 disordered regions span residues 3517-3543 and 3590-3674; these read KQQH…QSPR and QAEA…EDTM. Composition is skewed to polar residues over residues 3596–3615 and 3651–3662; these read NGTT…SSQP and QLNNSFPSSRGR. Residues Ser-3601, Ser-3602, Ser-3606, Ser-3612, Ser-3613, and Ser-3655 each carry the phosphoserine modification.

In terms of assembly, interacts with SYNM. Interacts with the syntrophins SNTG1 and SNTG2. Interacts with KRT19. Component of the dystrophin-associated glycoprotein complex which is composed of three subcomplexes: a cytoplasmic complex comprised of DMD (or UTRN), DTNA and a number of syntrophins, such as SNTB1, SNTB2, SNTG1 and SNTG2, the transmembrane dystroglycan complex, and the sarcoglycan-sarcospan complex. Interacts with DAG1 (betaDAG1) with DMD; the interaction is inhibited by phosphorylation on the PPXY motif of DAG1. Interacts with SYNM; SNTA1 and SNTB1. Interacts with CMYA5. Directly interacts with ANK2 and ANK3; these interactions do not interfere with betaDAG1-binding and are necessary for proper localization in muscle cells. Identified in a dystroglycan complex that contains at least PRX, DRP2, UTRN, DMD and DAG1. Interacts with DTNB. Interacts with PGM5; the interaction is direct. Interacts with NOS1; localizes NOS1 to sarcolemma in muscle cells. As to expression, in the retina, expressed in the outer plexiform layer (OPL) and around the blood vessels. Also observed at the vitreal border of the retina corresponding to the inner limiting membrane (ILM). Presynaptically localized in cone pedicles and postsynaptically in bipolar cells (at protein level).

The protein localises to the cell membrane. The protein resides in the sarcolemma. Its subcellular location is the cytoplasm. It is found in the cytoskeleton. It localises to the postsynaptic cell membrane. Its function is as follows. Anchors the extracellular matrix to the cytoskeleton via F-actin. Ligand for dystroglycan. Component of the dystrophin-associated glycoprotein complex which accumulates at the neuromuscular junction (NMJ) and at a variety of synapses in the peripheral and central nervous systems and has a structural function in stabilizing the sarcolemma. Also implicated in signaling events and synaptic transmission. The chain is Dystrophin from Sus scrofa (Pig).